A 408-amino-acid polypeptide reads, in one-letter code: FAD-dependent monooxygenase nscC (408 aa).

An N-terminal signal peptide occupies residues 1 to 20 (MAPPLPILIIGAGISGLTTA). FAD contacts are provided by Glu34 and Ala45. Asn91 and Asn103 each carry an N-linked (GlcNAc...) asparagine glycan. FAD is bound at residue Arg119. Residues Asn170 and Asn231 are each glycosylated (N-linked (GlcNAc...) asparagine). Residues Asp328 and Gly341 each contribute to the FAD site.

This sequence belongs to the paxM FAD-dependent monooxygenase family. Requires FAD as cofactor.

Its pathway is secondary metabolite biosynthesis. Its function is as follows. FAD-dependent monooxygenase; part of the gene cluster that mediates the biosynthesis of neosartoricin, a prenylated anthracenone that exhibits T-cell antiproliferative activity, suggestive of a physiological role as an immunosuppressive agent. The non-reducing polyketide synthase nscA probably synthesizes and cyclizes the decaketide backbone. The hydrolase nscB then mediates the product release through hydrolysis followed by spontaneous decarboxylation. The prenyltransferase nscD catalyzes the addition of the dimethylallyl group to the aromatic C5. The FAD-dependent monooxygenase nscC is then responsible for the stereospecific hydroxylation at C2. There is no gene encoding O-acetyltransferase in the nsc gene cluster; thus, the last step of 2-O-acetylation leading to neosartoricin may be catalyzed by an unidentified O-acetyltransferase. The protein is FAD-dependent monooxygenase nscC of Neosartorya fischeri (strain ATCC 1020 / DSM 3700 / CBS 544.65 / FGSC A1164 / JCM 1740 / NRRL 181 / WB 181) (Aspergillus fischerianus).